A 153-amino-acid polypeptide reads, in one-letter code: Large ribosomal subunit protein uL22 (153 aa).

The tract at residues 110–153 (ITVIVESRPPKQKGASAASARSRRAQGSKAAATKKSAETKEGSE) is disordered. Over residues 144-153 (KSAETKEGSE) the composition is skewed to basic and acidic residues.

This sequence belongs to the universal ribosomal protein uL22 family. Part of the 50S ribosomal subunit.

In terms of biological role, this protein binds specifically to 23S rRNA; its binding is stimulated by other ribosomal proteins, e.g. L4, L17, and L20. It is important during the early stages of 50S assembly. It makes multiple contacts with different domains of the 23S rRNA in the assembled 50S subunit and ribosome. The globular domain of the protein is located near the polypeptide exit tunnel on the outside of the subunit, while an extended beta-hairpin is found that lines the wall of the exit tunnel in the center of the 70S ribosome. The protein is Large ribosomal subunit protein uL22 of Mycolicibacterium smegmatis (strain ATCC 700084 / mc(2)155) (Mycobacterium smegmatis).